The sequence spans 180 residues: Large ribosomal subunit protein uL6 (180 aa).

This sequence belongs to the universal ribosomal protein uL6 family. Part of the 50S ribosomal subunit.

This protein binds to the 23S rRNA, and is important in its secondary structure. It is located near the subunit interface in the base of the L7/L12 stalk, and near the tRNA binding site of the peptidyltransferase center. In Thermus aquaticus, this protein is Large ribosomal subunit protein uL6.